Reading from the N-terminus, the 358-residue chain is Mannonate dehydratase (358 aa).

It belongs to the mannonate dehydratase family. Fe(2+) is required as a cofactor. Mn(2+) serves as cofactor.

It carries out the reaction D-mannonate = 2-dehydro-3-deoxy-D-gluconate + H2O. Its pathway is carbohydrate metabolism; pentose and glucuronate interconversion. Catalyzes the dehydration of D-mannonate. The protein is Mannonate dehydratase of Lactococcus lactis subsp. lactis (strain IL1403) (Streptococcus lactis).